Here is a 186-residue protein sequence, read N- to C-terminus: MSTLTDTIQIENVVASTDLSQELALEQLATDLPGAEYNPGDFPGVIYRLDDPKSATLIFDSGKAVCTGAQSVDDVHDAISIVVEDLRDLGIDIPPSPPVHVQNIVCSGSLDQDLNLNAIAIGLGLEDVEYEPEQFPGLVYRLNDPDVVVLLFGSGKLVITGGSNPDDAHHALEIIHERLTDLGLLE.

Tandem repeats lie at residues 10 to 86 (IENV…VEDL) and 101 to 179 (VQNI…HERL).

It belongs to the TBP family.

In terms of biological role, general factor that plays a role in the activation of archaeal genes transcribed by RNA polymerase. Binds specifically to the TATA box promoter element which lies close to the position of transcription initiation. The protein is TATA-box-binding protein D (tbpD) of Halobacterium salinarum (strain ATCC 700922 / JCM 11081 / NRC-1) (Halobacterium halobium).